The sequence spans 267 residues: tRNA pseudouridine synthase A (267 aa).

Asp53 functions as the Nucleophile in the catalytic mechanism. Tyr111 serves as a coordination point for substrate.

The protein belongs to the tRNA pseudouridine synthase TruA family. In terms of assembly, homodimer.

It carries out the reaction uridine(38/39/40) in tRNA = pseudouridine(38/39/40) in tRNA. In terms of biological role, formation of pseudouridine at positions 38, 39 and 40 in the anticodon stem and loop of transfer RNAs. In Alcanivorax borkumensis (strain ATCC 700651 / DSM 11573 / NCIMB 13689 / SK2), this protein is tRNA pseudouridine synthase A.